A 625-amino-acid polypeptide reads, in one-letter code: DELLA protein SLR1 (625 aa).

Positions Met-1 to Glu-34 are disordered. Positions Asp-39–Ala-43 match the DELLA motif motif. Positions Thr-167–Val-209 are disordered. Low complexity predominate over residues Thr-189–Ser-198. In terms of domain architecture, GRAS spans Val-232 to Arg-621. A leucine repeat I (LRI) region spans residues Ile-239–Tyr-294. The required for possible homodimerization stretch occupies residues Leu-241–Met-278. The LxCxE motif motif lies at Leu-246 to Glu-250. A VHIID region spans residues His-313–Gly-378. Residues Val-344–Asp-348 carry the VHIID motif. The interval Gln-392–Glu-431 is leucine repeat II (LRII). The PFYRE stretch occupies residues Ile-441 to Asn-542. The LXXLL motif motif lies at Leu-449–Leu-453. The SAW stretch occupies residues Ala-545 to Arg-621.

Belongs to the GRAS family. DELLA subfamily. In terms of assembly, may be a homodimer. Interacts directly with the GID2 component of the SCF(GID2) complex. Interacts with GID1 in a GA-dependent manner, probably leading to its interaction with GID2 and its subsequent degradation. Interacts with D14 and GID1 in an strigolactone-dependent manner. Interacts with HD16/EL1. Phosphorylated on Ser/Thr residues in the N-terminal part. Both phosphorylated and unphosphorylated forms are degraded upon GA treatment, suggesting that phosphorylation does not trigger ubiquitination. Phosphorylated by HD16/EL1. Phosphorylation enhances its stability. In terms of processing, ubiquitinated. Upon GA application it is ubiquitinated by the SCF(GID2) complex, leading to its subsequent degradation. In terms of tissue distribution, expressed in nodes, internodes, leaf sheats of young seedlings and ears of adult plants. Weakly expressed in leaf blade and root.

It is found in the nucleus. Its function is as follows. Probable transcriptional regulator that acts as a repressor of the gibberellin (GA) signaling pathway. Probably acts by participating in large multiprotein complexes that repress transcription of GA-inducible genes. Upon GA application, it is degraded by the proteasome, allowing the GA signaling pathway. In contrast, its overexpression prevents the GA signaling pathway and induces a dwarf phenotype. The chain is DELLA protein SLR1 from Oryza sativa subsp. japonica (Rice).